The primary structure comprises 966 residues: Aminopeptidase N (966 aa).

At 1 to 8 the chain is on the cytoplasmic side; the sequence is MAKGFYIS. A helical; Signal-anchor for type II membrane protein transmembrane segment spans residues 9–32; it reads KSLGILGILLGVAALCTIVALSVV. Residues 33–65 are cytosolic Ser/Thr-rich junction; that stretch reads YRQEKNKNTSQSPSMAPLNPTATSSPATTLDQN. At 33–966 the chain is on the extracellular side; that stretch reads YRQEKNKNTS…VLAWFTANSA (934 aa). Residues Asn-40 and Asn-125 are each glycosylated (N-linked (GlcNAc...) asparagine). The disordered stretch occupies residues 40–61; that stretch reads NTSQSPSMAPLNPTATSSPATT. Positions 66-966 are metalloprotease; that stretch reads LPWNRYRLPK…VLAWFTANSA (901 aa). Tyr-173 is modified (sulfotyrosine). Residues Asn-259 and Asn-315 are each glycosylated (N-linked (GlcNAc...) asparagine). 348–352 is a substrate binding site; sequence GAMEN. His-384 is a binding site for Zn(2+). The active-site Proton acceptor is Glu-385. Residues His-388 and Glu-407 each contribute to the Zn(2+) site. 2 positions are modified to sulfotyrosine: Tyr-415 and Tyr-420. N-linked (GlcNAc...) asparagine glycans are attached at residues Asn-552, Asn-570, Asn-624, and Asn-734. Cystine bridges form between Cys-760–Cys-767 and Cys-797–Cys-833. An N-linked (GlcNAc...) asparagine glycan is attached at Asn-817. Tyr-852 carries the phosphotyrosine modification. Position 912 is a sulfotyrosine (Tyr-912).

Belongs to the peptidase M1 family. In terms of assembly, homodimer. Interacts with SLC6A19. It depends on Zn(2+) as a cofactor. In terms of processing, sulfated. N- and O-glycosylated. Post-translationally, may undergo proteolysis and give rise to a soluble form.

The protein localises to the cell membrane. The enzyme catalyses Release of an N-terminal amino acid, Xaa-|-Yaa- from a peptide, amide or arylamide. Xaa is preferably Ala, but may be most amino acids including Pro (slow action). When a terminal hydrophobic residue is followed by a prolyl residue, the two may be released as an intact Xaa-Pro dipeptide.. Functionally, broad specificity aminopeptidase which plays a role in the final digestion of peptides generated from hydrolysis of proteins by gastric and pancreatic proteases. Also involved in the processing of various peptides including peptide hormones, such as angiotensin III and IV, neuropeptides, and chemokines. May also be involved the cleavage of peptides bound to major histocompatibility complex class II molecules of antigen presenting cells. May have a role in angiogenesis and promote cholesterol crystallization. May have a role in amino acid transport by acting as binding partner of amino acid transporter SLC6A19 and regulating its activity. In Oryctolagus cuniculus (Rabbit), this protein is Aminopeptidase N (ANPEP).